A 374-amino-acid chain; its full sequence is 4-hydroxy-3-methylbut-2-en-1-yl diphosphate synthase (flavodoxin) (374 aa).

Residues Cys-272, Cys-275, Cys-307, and Glu-314 each coordinate [4Fe-4S] cluster.

It belongs to the IspG family. It depends on [4Fe-4S] cluster as a cofactor.

The catalysed reaction is (2E)-4-hydroxy-3-methylbut-2-enyl diphosphate + oxidized [flavodoxin] + H2O + 2 H(+) = 2-C-methyl-D-erythritol 2,4-cyclic diphosphate + reduced [flavodoxin]. The protein operates within isoprenoid biosynthesis; isopentenyl diphosphate biosynthesis via DXP pathway; isopentenyl diphosphate from 1-deoxy-D-xylulose 5-phosphate: step 5/6. In terms of biological role, converts 2C-methyl-D-erythritol 2,4-cyclodiphosphate (ME-2,4cPP) into 1-hydroxy-2-methyl-2-(E)-butenyl 4-diphosphate. This Acidiphilium cryptum (strain JF-5) protein is 4-hydroxy-3-methylbut-2-en-1-yl diphosphate synthase (flavodoxin).